The sequence spans 545 residues: T-box transcription factor TBX4 (545 aa).

Positions 71–251 (LHEKELWKKF…NNPFAKGFRG (181 aa)) form a DNA-binding region, T-box. Residues 479 to 509 (QSQVRERGPSASFPRERGLPQGCERKPPSPH) form a disordered region. Basic and acidic residues predominate over residues 482–505 (VRERGPSASFPRERGLPQGCERKP). Residue Ser-507 is modified to Phosphoserine.

It localises to the nucleus. Transcriptional regulator that has an essential role in the organogenesis of lungs, pelvis, and hindlimbs. The sequence is that of T-box transcription factor TBX4 (TBX4) from Homo sapiens (Human).